A 118-amino-acid polypeptide reads, in one-letter code: Large ribosomal subunit protein bL20 (118 aa).

It belongs to the bacterial ribosomal protein bL20 family.

Its function is as follows. Binds directly to 23S ribosomal RNA and is necessary for the in vitro assembly process of the 50S ribosomal subunit. It is not involved in the protein synthesizing functions of that subunit. This is Large ribosomal subunit protein bL20 from Clostridioides difficile (strain 630) (Peptoclostridium difficile).